Reading from the N-terminus, the 338-residue chain is CDP-paratose 2-epimerase (338 aa).

Thr-124 serves as a coordination point for substrate. The active-site Proton acceptor is the Tyr-164.

Belongs to the NAD(P)-dependent epimerase/dehydratase family. In terms of assembly, homotetramer. It depends on NAD(+) as a cofactor.

The enzyme catalyses CDP-alpha-D-paratose = CDP-3,6-dideoxy-alpha-D-mannose. It functions in the pathway nucleotide-sugar biosynthesis; CDP-3,6-dideoxy-D-mannose biosynthesis; CDP-3,6-dideoxy-D-mannose from CTP and alpha-D-glucose 1-phosphate: step 5/5. Its function is as follows. Catalyzes the isomeration of CDP-paratose to CDP-tyvelose. This is CDP-paratose 2-epimerase (rfbE) from Salmonella typhi.